The primary structure comprises 229 residues: Trehalose-6-phosphate phosphatase-related protein (229 aa).

D5 serves as the catalytic Nucleophile. 3 residues coordinate Mg(2+): D5, D7, and D177. A substrate-binding site is contributed by D5–D7.

It belongs to the trehalose phosphatase family. The cofactor is Mg(2+).

It catalyses the reaction alpha,alpha-trehalose 6-phosphate + H2O = alpha,alpha-trehalose + phosphate. Its pathway is glycan biosynthesis; trehalose biosynthesis. Removes the phosphate from trehalose 6-phosphate (Tre6P) to produce free trehalose. Also catalyzes the dephosphorylation of para-nitrophenyl phosphate (pNPP), but with lesser efficiency (in vitro). The sequence is that of Trehalose-6-phosphate phosphatase-related protein from Thermoplasma acidophilum (strain ATCC 25905 / DSM 1728 / JCM 9062 / NBRC 15155 / AMRC-C165).